Reading from the N-terminus, the 138-residue chain is SPbeta prophage-derived uncharacterized protein YopJ (138 aa).

The protein is SPbeta prophage-derived uncharacterized protein YopJ (yopJ) of Bacillus subtilis (strain 168).